The following is an 86-amino-acid chain: Large ribosomal subunit protein bL31B (86 aa).

It belongs to the bacterial ribosomal protein bL31 family. Type B subfamily. As to quaternary structure, part of the 50S ribosomal subunit.

This is Large ribosomal subunit protein bL31B from Streptococcus uberis (strain ATCC BAA-854 / 0140J).